The sequence spans 187 residues: GTP cyclohydrolase 1 (187 aa).

C81, H84, and C152 together coordinate Zn(2+).

Belongs to the GTP cyclohydrolase I family. Homomer.

It catalyses the reaction GTP + H2O = 7,8-dihydroneopterin 3'-triphosphate + formate + H(+). Its pathway is cofactor biosynthesis; 7,8-dihydroneopterin triphosphate biosynthesis; 7,8-dihydroneopterin triphosphate from GTP: step 1/1. In Pyrobaculum neutrophilum (strain DSM 2338 / JCM 9278 / NBRC 100436 / V24Sta) (Thermoproteus neutrophilus), this protein is GTP cyclohydrolase 1.